Here is a 249-residue protein sequence, read N- to C-terminus: Adapter protein MecA (249 aa).

The protein belongs to the MecA family. In terms of assembly, homodimer.

Enables the recognition and targeting of unfolded and aggregated proteins to the ClpC protease or to other proteins involved in proteolysis. The polypeptide is Adapter protein MecA (Streptococcus thermophilus (strain CNRZ 1066)).